The following is a 115-amino-acid chain: Large ribosomal subunit protein uL24 (115 aa).

Belongs to the universal ribosomal protein uL24 family. Part of the 50S ribosomal subunit.

Its function is as follows. One of two assembly initiator proteins, it binds directly to the 5'-end of the 23S rRNA, where it nucleates assembly of the 50S subunit. In terms of biological role, one of the proteins that surrounds the polypeptide exit tunnel on the outside of the subunit. The sequence is that of Large ribosomal subunit protein uL24 from Synechocystis sp. (strain ATCC 27184 / PCC 6803 / Kazusa).